A 241-amino-acid polypeptide reads, in one-letter code: uncharacterized protein (241 aa).

Transmembrane regions (helical) follow at residues 12 to 32, 39 to 59, 89 to 109, 117 to 137, 152 to 172, 180 to 200, and 215 to 235; these read ITEI…LLLL, LLWL…EMKF, VYDV…ICYT, YYTF…NCVV, LFEY…ATML, IHFY…WFVY, and YVEA…SPLI.

The protein belongs to the mimivirus L68/R809 family.

The protein localises to the membrane. This is an uncharacterized protein from Acanthamoeba polyphaga mimivirus (APMV).